Here is a 139-residue protein sequence, read N- to C-terminus: MLIPRRVKHRKQHHPGRSGQATGGTKVSFGEFGIQALTPAYVTNRQIESARIAMTRHIKRGGKVWINIYPDRPLTKKPAETRMGSGKGSPEWWVANVKPGRVLFEVSGVSEDLAREAMSRAIHKLPLKARIIKREEGDA.

Residues 1–16 are compositionally biased toward basic residues; sequence MLIPRRVKHRKQHHPG. A disordered region spans residues 1–25; the sequence is MLIPRRVKHRKQHHPGRSGQATGGT.

The protein belongs to the universal ribosomal protein uL16 family. Part of the 50S ribosomal subunit.

Its function is as follows. Binds 23S rRNA and is also seen to make contacts with the A and possibly P site tRNAs. In Leifsonia xyli subsp. xyli (strain CTCB07), this protein is Large ribosomal subunit protein uL16.